A 257-amino-acid chain; its full sequence is Diaminopimelate epimerase (257 aa).

Substrate contacts are provided by asparagine 6 and asparagine 57. Cysteine 66 serves as the catalytic Proton donor. Substrate-binding positions include 67–68 (GN), asparagine 170, and 188–189 (ER). The active-site Proton acceptor is cysteine 198. 199-200 (GT) lines the substrate pocket.

This sequence belongs to the diaminopimelate epimerase family. As to quaternary structure, homodimer.

Its subcellular location is the cytoplasm. The enzyme catalyses (2S,6S)-2,6-diaminopimelate = meso-2,6-diaminopimelate. Its pathway is amino-acid biosynthesis; L-lysine biosynthesis via DAP pathway; DL-2,6-diaminopimelate from LL-2,6-diaminopimelate: step 1/1. Functionally, catalyzes the stereoinversion of LL-2,6-diaminopimelate (L,L-DAP) to meso-diaminopimelate (meso-DAP), a precursor of L-lysine and an essential component of the bacterial peptidoglycan. The protein is Diaminopimelate epimerase of Chlorobaculum tepidum (strain ATCC 49652 / DSM 12025 / NBRC 103806 / TLS) (Chlorobium tepidum).